Consider the following 352-residue polypeptide: uncharacterized protein (352 aa).

This is an uncharacterized protein from Thermoproteus tenax (TTV1).